The following is a 289-amino-acid chain: ATP synthase mitochondrial F1 complex assembly factor 2 (289 aa).

A mitochondrion-targeting transit peptide spans 1–40; that stretch reads MWRIYPRLRDRWRGLLDRRLSDPTVSVWPGPAPQPPARAY. N6-succinyllysine is present on Lys133.

This sequence belongs to the ATP12 family. Interacts with ATP5F1B; involved in the assembly of the F1 component of the mitochondrial ATP synthase (ATPase). Interacts with FMC1.

It is found in the mitochondrion inner membrane. Functionally, plays a role in the assembly of the F1 component of the mitochondrial ATP synthase (ATPase). The chain is ATP synthase mitochondrial F1 complex assembly factor 2 from Mus musculus (Mouse).